The following is a 1165-amino-acid chain: Linoleate diol synthase (1165 aa).

Positions 104–448 are fatty acid alpha-dioxygenase; that stretch reads TDGLINDLWD…DGAFDDTELV (345 aa). His-203 contacts heme b. Ca(2+) contacts are provided by Asp-204, Ser-219, Tyr-221, Asp-223, and Ser-225. Tyr-376 is a catalytic residue. Heme b is bound at residue His-379. The tract at residues 666–1161 is epoxy alcohol synthase; sequence EVLSNQKDYK…ATTMKINWEG (496 aa). Cys-1080 is a heme binding site. A disordered region spans residues 1114 to 1134; that stretch reads RSYPASQWPGQAGRPPRDPAW.

The protein belongs to the peroxidase family. Homotetramer. Heme b is required as a cofactor. It depends on Ca(2+) as a cofactor. Requires heme as cofactor. The N-terminus is blocked.

It carries out the reaction (9Z,12Z)-octadecadienoate + O2 = (8R,9Z,12Z)-8-hydroperoxyoctadeca-9,12-dienoate. The enzyme catalyses (8R,9Z,12Z)-8-hydroperoxyoctadeca-9,12-dienoate = (7S,8S,9Z,12Z)-7,8-dihydroxyoctadeca-9,12-dienoate. Its function is as follows. 7,8-linoleate diol synthase is a bifunctional enzyme that converts linoleic acid (18:2n-6) into 8-hydroperoxy-8(E),12(Z)-octadecadienoic acid (8-HPODE) and then catalyzes the isomerization of the resulting hydroperoxide to 7,8-dihydroxy-9(Z),12(Z)-octadecadienoic acid (7,8-DiHODE). This is Linoleate diol synthase from Gaeumannomyces graminis (Turf grass take-all root rot fungus).